Here is a 427-residue protein sequence, read N- to C-terminus: Phosphatidate cytidylyltransferase, mitochondrial (427 aa).

Over residues 94-106 the composition is skewed to polar residues; the sequence is YNRNGDGSTSTEN. The segment at 94–113 is disordered; sequence YNRNGDGSTSTENPSKKEEQ.

This sequence belongs to the TAM41 family. It depends on Mg(2+) as a cofactor.

Its subcellular location is the mitochondrion inner membrane. The catalysed reaction is a 1,2-diacyl-sn-glycero-3-phosphate + CTP + H(+) = a CDP-1,2-diacyl-sn-glycerol + diphosphate. It functions in the pathway phospholipid metabolism; CDP-diacylglycerol biosynthesis; CDP-diacylglycerol from sn-glycerol 3-phosphate: step 3/3. In terms of biological role, catalyzes the formation of CDP-diacylglycerol (CDP-DAG) from phosphatidic acid (PA) in the mitochondrial inner membrane. Required for the biosynthesis of the dimeric phospholipid cardiolipin, which stabilizes supercomplexes of the mitochondrial respiratory chain in the mitochondrial inner membrane. This is Phosphatidate cytidylyltransferase, mitochondrial from Dictyostelium discoideum (Social amoeba).